Reading from the N-terminus, the 389-residue chain is Teichoic acid glycerol-phosphate transferase (389 aa).

This sequence belongs to the CDP-glycerol glycerophosphotransferase family.

It is found in the cell membrane. It carries out the reaction 4-O-[(2R)-glycerylphospho]-N-acetyl-beta-D-mannosaminyl-(1-&gt;4)-N-acetyl-alpha-D-glucosaminyl di-trans,octa-cis-undecaprenyl diphosphate + CDP-glycerol = 4-O-[di(2R)-glycerylphospho]-N-acetyl-beta-D-mannosaminyl-(1-&gt;4)-N-acetyl-alpha-D-glucosaminyl di-trans,octa-cis-undecaprenyl diphosphate + CMP + H(+). Its pathway is cell wall biogenesis; poly(ribitol phosphate) teichoic acid biosynthesis. In terms of biological role, catalyzes the addition of a second glycerol phosphate unit from CDP-glycerol to the prenolpyrophosphate-linked disaccharide, to complete the linkage unit. This Staphylococcus aureus (strain NCTC 8325 / PS 47) protein is Teichoic acid glycerol-phosphate transferase (tarF).